A 293-amino-acid polypeptide reads, in one-letter code: 4-diphosphocytidyl-2-C-methyl-D-erythritol kinase (293 aa).

The active site involves lysine 16. 99–109 (PMGAGLGGGSS) serves as a coordination point for ATP. Aspartate 141 is a catalytic residue.

This sequence belongs to the GHMP kinase family. IspE subfamily.

The catalysed reaction is 4-CDP-2-C-methyl-D-erythritol + ATP = 4-CDP-2-C-methyl-D-erythritol 2-phosphate + ADP + H(+). The protein operates within isoprenoid biosynthesis; isopentenyl diphosphate biosynthesis via DXP pathway; isopentenyl diphosphate from 1-deoxy-D-xylulose 5-phosphate: step 3/6. Functionally, catalyzes the phosphorylation of the position 2 hydroxy group of 4-diphosphocytidyl-2C-methyl-D-erythritol. This chain is 4-diphosphocytidyl-2-C-methyl-D-erythritol kinase, found in Burkholderia multivorans (strain ATCC 17616 / 249).